The primary structure comprises 294 residues: Protoheme IX farnesyltransferase (294 aa).

9 helical membrane-spanning segments follow: residues 22 to 42 (VTQL…PELP), 46 to 66 (IVVA…AINC), 89 to 109 (ITVP…MWVL), 116 to 136 (LTMW…TIIL), 143 to 163 (NIVI…AAVA), 170 to 190 (AWIL…ALAL), 212 to 232 (FTQF…MLPF), 234 to 254 (VGMS…IFVW), and 272 to 292 (FAYS…DHYL).

It belongs to the UbiA prenyltransferase family. Protoheme IX farnesyltransferase subfamily.

Its subcellular location is the cell inner membrane. It carries out the reaction heme b + (2E,6E)-farnesyl diphosphate + H2O = Fe(II)-heme o + diphosphate. The protein operates within porphyrin-containing compound metabolism; heme O biosynthesis; heme O from protoheme: step 1/1. Converts heme B (protoheme IX) to heme O by substitution of the vinyl group on carbon 2 of heme B porphyrin ring with a hydroxyethyl farnesyl side group. In Janthinobacterium sp. (strain Marseille) (Minibacterium massiliensis), this protein is Protoheme IX farnesyltransferase.